Reading from the N-terminus, the 450-residue chain is Tubulin beta-3 chain (450 aa).

Residues glutamine 11, glutamate 69, serine 138, glycine 142, threonine 143, glycine 144, asparagine 204, and asparagine 226 each coordinate GTP. Glutamate 69 contributes to the Mg(2+) binding site. Residues 420 to 450 (SEYQQYQDATADEEGDYEDEEEGEYQQEEEY) form a disordered region. The segment covering 429–450 (TADEEGDYEDEEEGEYQQEEEY) has biased composition (acidic residues).

This sequence belongs to the tubulin family. As to quaternary structure, dimer of alpha and beta chains. A typical microtubule is a hollow water-filled tube with an outer diameter of 25 nm and an inner diameter of 15 nM. Alpha-beta heterodimers associate head-to-tail to form protofilaments running lengthwise along the microtubule wall with the beta-tubulin subunit facing the microtubule plus end conferring a structural polarity. Microtubules usually have 13 protofilaments but different protofilament numbers can be found in some organisms and specialized cells. Mg(2+) is required as a cofactor.

Its subcellular location is the cytoplasm. It localises to the cytoskeleton. Its function is as follows. Tubulin is the major constituent of microtubules, a cylinder consisting of laterally associated linear protofilaments composed of alpha- and beta-tubulin heterodimers. Microtubules grow by the addition of GTP-tubulin dimers to the microtubule end, where a stabilizing cap forms. Below the cap, tubulin dimers are in GDP-bound state, owing to GTPase activity of alpha-tubulin. The sequence is that of Tubulin beta-3 chain (TUBB3) from Arabidopsis thaliana (Mouse-ear cress).